A 532-amino-acid chain; its full sequence is Membrane protein insertase YidC (532 aa).

The next 5 helical transmembrane spans lie at 7-27 (FFIF…QSQM), 336-356 (LTIL…ITFI), 413-433 (GGFL…YMLI), 450-470 (LSSQ…MFFI), and 492-512 (PVIF…YYII).

This sequence belongs to the OXA1/ALB3/YidC family. Type 1 subfamily. In terms of assembly, interacts with the Sec translocase complex via SecD. Specifically interacts with transmembrane segments of nascent integral membrane proteins during membrane integration.

Its subcellular location is the cell membrane. Functionally, required for the insertion and/or proper folding and/or complex formation of integral membrane proteins into the membrane. Involved in integration of membrane proteins that insert both dependently and independently of the Sec translocase complex, as well as at least some lipoproteins. Aids folding of multispanning membrane proteins. The chain is Membrane protein insertase YidC from Buchnera aphidicola subsp. Acyrthosiphon pisum (strain 5A).